We begin with the raw amino-acid sequence, 519 residues long: Protein nucleotidyltransferase YdiU (519 aa).

Residues Gly100, Gly102, Arg103, Lys123, Asp135, Gly136, Arg193, and Arg200 each coordinate ATP. Asp270 acts as the Proton acceptor in catalysis. 2 residues coordinate Mg(2+): Asn271 and Asp280. Position 280 (Asp280) interacts with ATP.

It belongs to the SELO family. Mg(2+) is required as a cofactor. The cofactor is Mn(2+).

It catalyses the reaction L-seryl-[protein] + ATP = 3-O-(5'-adenylyl)-L-seryl-[protein] + diphosphate. The enzyme catalyses L-threonyl-[protein] + ATP = 3-O-(5'-adenylyl)-L-threonyl-[protein] + diphosphate. The catalysed reaction is L-tyrosyl-[protein] + ATP = O-(5'-adenylyl)-L-tyrosyl-[protein] + diphosphate. It carries out the reaction L-histidyl-[protein] + UTP = N(tele)-(5'-uridylyl)-L-histidyl-[protein] + diphosphate. It catalyses the reaction L-seryl-[protein] + UTP = O-(5'-uridylyl)-L-seryl-[protein] + diphosphate. The enzyme catalyses L-tyrosyl-[protein] + UTP = O-(5'-uridylyl)-L-tyrosyl-[protein] + diphosphate. In terms of biological role, nucleotidyltransferase involved in the post-translational modification of proteins. It can catalyze the addition of adenosine monophosphate (AMP) or uridine monophosphate (UMP) to a protein, resulting in modifications known as AMPylation and UMPylation. The protein is Protein nucleotidyltransferase YdiU of Xylella fastidiosa (strain Temecula1 / ATCC 700964).